Reading from the N-terminus, the 303-residue chain is DnaJ homolog subfamily C member 17 (303 aa).

Residues 11–76 (DLYALLGIEE…AARAAYDKVR (66 aa)) enclose the J domain. 2 stretches are compositionally biased toward basic and acidic residues: residues 78–106 (ARKQ…RERQ) and 150–166 (IRQD…ENTE). 2 disordered regions span residues 78–124 (ARKQ…TTTL) and 150–170 (IRQD…GKGT). The RRM domain maps to 178-249 (KCKKEDESQG…NPLKVSWLEG (72 aa)). Lysine 264 carries the post-translational modification N6-methyllysine.

It is found in the cytoplasm. It localises to the nucleus. Its function is as follows. May negatively affect PAX8-induced thyroglobulin/TG transcription. The sequence is that of DnaJ homolog subfamily C member 17 (Dnajc17) from Rattus norvegicus (Rat).